The sequence spans 155 residues: Small ribosomal subunit protein uS7cz/uS7cy (155 aa).

This sequence belongs to the universal ribosomal protein uS7 family. Part of the 30S ribosomal subunit.

It localises to the plastid. Its subcellular location is the chloroplast. Functionally, one of the primary rRNA binding proteins, it binds directly to 16S rRNA where it nucleates assembly of the head domain of the 30S subunit. The sequence is that of Small ribosomal subunit protein uS7cz/uS7cy (rps7-A) from Coffea arabica (Arabian coffee).